Here is a 331-residue protein sequence, read N- to C-terminus: UPF0324 membrane protein SERP0111 (331 aa).

Transmembrane regions (helical) follow at residues 7–26, 31–48, 69–88, 93–115, 122–144, 154–176, 183–205, 249–271, 275–297, and 308–330; these read ASFM…SYIL, ILHT…AMIY, LLKF…DILG, LLLI…NQII, SILL…APIL, SVGI…EAIF, YGAW…GIGG, IPYF…IPSL, IINV…NIVL, and FIVI…SIMF.

The protein belongs to the UPF0324 family.

The protein resides in the cell membrane. This is UPF0324 membrane protein SERP0111 from Staphylococcus epidermidis (strain ATCC 35984 / DSM 28319 / BCRC 17069 / CCUG 31568 / BM 3577 / RP62A).